The following is a 107-amino-acid chain: Cysteine proteinase inhibitor (107 aa).

The region spanning 18–107 is the Cystatin domain; it reads GGVQDAPAGR…KQLQEFKPAA (90 aa). Positions 63-67 match the Secondary area of contact motif; sequence QVVAG.

The protein belongs to the cystatin family. Phytocystatin subfamily. Expressed in embryos, developing endosperms, leaves, roots, flowers and pollen grains.

Inhibits papain, ficin, cathepsin B and, to a lesser extent, chymopapain, but is inactive against bromelain. Inhibits the growth of pathogenic fungi. Regulated by the DOF transcription factors SAD (activator) and BPBF (repressor). The protein is Cysteine proteinase inhibitor (ICY) of Hordeum vulgare (Barley).